The primary structure comprises 110 residues: Small ribosomal subunit protein eS25 (110 aa).

Residues 1 to 37 form a disordered region; the sequence is MGGASKKPISTMEKRLKKEAEKQQKAEEKKKGPSKTG. The span at 12–37 shows a compositional bias: basic and acidic residues; the sequence is MEKRLKKEAEKQQKAEEKKKGPSKTG.

Belongs to the eukaryotic ribosomal protein eS25 family.

The protein is Small ribosomal subunit protein eS25 (rps25e) of Saccharolobus solfataricus (strain ATCC 35092 / DSM 1617 / JCM 11322 / P2) (Sulfolobus solfataricus).